The chain runs to 359 residues: Serine/threonine-protein kinase SAPK7 (359 aa).

Positions 4–260 (YELLKDIGAG…IREIRNHPWF (257 aa)) constitute a Protein kinase domain. ATP-binding positions include 10–18 (IGAGNFGVA) and lysine 33. Aspartate 123 (proton acceptor) is an active-site residue. Residues 299–359 (EEARTPPRSS…VHASGEFQLS (61 aa)) form a disordered region. Residues 331-343 (EEQEEEEDAEDEY) show a composition bias toward acidic residues.

Belongs to the protein kinase superfamily. Ser/Thr protein kinase family. In terms of processing, may be phosphorylated. In terms of tissue distribution, weakly expressed in roots. Expressed in roots of young seedlings.

It localises to the cytoplasm. Its subcellular location is the nucleus. It carries out the reaction L-seryl-[protein] + ATP = O-phospho-L-seryl-[protein] + ADP + H(+). The enzyme catalyses L-threonyl-[protein] + ATP = O-phospho-L-threonyl-[protein] + ADP + H(+). With respect to regulation, activated by hyperosmotic stress. May play a role in signal transduction of hyperosmotic response. In Oryza sativa subsp. japonica (Rice), this protein is Serine/threonine-protein kinase SAPK7 (SAPK7).